We begin with the raw amino-acid sequence, 338 residues long: Glycerol-3-phosphate dehydrogenase [NAD(P)+] (338 aa).

NADPH contacts are provided by Ser-12, Trp-13, Lys-34, and Lys-110. 3 residues coordinate sn-glycerol 3-phosphate: Lys-110, Gly-141, and Ser-143. Ala-145 serves as a coordination point for NADPH. The sn-glycerol 3-phosphate site is built by Lys-196, Asp-249, Ser-259, Arg-260, and Asn-261. The Proton acceptor role is filled by Lys-196. Position 260 (Arg-260) interacts with NADPH. Positions 284 and 286 each coordinate NADPH.

This sequence belongs to the NAD-dependent glycerol-3-phosphate dehydrogenase family.

The protein resides in the cytoplasm. It carries out the reaction sn-glycerol 3-phosphate + NAD(+) = dihydroxyacetone phosphate + NADH + H(+). It catalyses the reaction sn-glycerol 3-phosphate + NADP(+) = dihydroxyacetone phosphate + NADPH + H(+). The protein operates within membrane lipid metabolism; glycerophospholipid metabolism. Catalyzes the reduction of the glycolytic intermediate dihydroxyacetone phosphate (DHAP) to sn-glycerol 3-phosphate (G3P), the key precursor for phospholipid synthesis. In Ligilactobacillus salivarius (strain UCC118) (Lactobacillus salivarius), this protein is Glycerol-3-phosphate dehydrogenase [NAD(P)+].